Consider the following 447-residue polypeptide: Hemopexin (447 aa).

Positions 1–18 (MRLIQALSLCLALSLSLA) are cleaved as a signal peptide. Positions 20–44 (PPQHKEDHSHKGKPGGEGHKHELHH) are disordered. Residues 22 to 44 (QHKEDHSHKGKPGGEGHKHELHH) are compositionally biased toward basic and acidic residues. Hemopexin repeat units follow at residues 53–93 (GIEF…FPEL), 99–151 (LGHV…FPGI), 152–197 (PDHL…FKSM), 198–243 (PNCT…FMRC), 262–304 (RVHL…FKEL), 305–351 (HSEV…VLGI), 352–395 (EGPV…TITQ), and 396–441 (FKRI…VSQQ). N87 is a glycosylation site (N-linked (GlcNAc...) asparagine). Residues N168 and N199 are each glycosylated (N-linked (GlcNAc...) asparagine). A heme-binding site is contributed by H293.

This sequence belongs to the hemopexin family.

Its subcellular location is the secreted. In terms of biological role, binds heme and transports it to the liver for breakdown and iron recovery, after which the free hemopexin returns to the circulation. This is Hemopexin from Danio rerio (Zebrafish).